Reading from the N-terminus, the 656-residue chain is Macrolide export ATP-binding/permease protein MacB (656 aa).

Residues isoleucine 20 to arginine 258 enclose the ABC transporter domain. Glycine 56–serine 63 lines the ATP pocket. 4 helical membrane-spanning segments follow: residues alanine 284–glycine 304, leucine 531–methionine 551, alanine 591–phenylalanine 611, and leucine 619–leucine 639.

Belongs to the ABC transporter superfamily. Macrolide exporter (TC 3.A.1.122) family. As to quaternary structure, homodimer.

It localises to the cell inner membrane. In terms of biological role, non-canonical ABC transporter that contains transmembrane domains (TMD), which form a pore in the inner membrane, and an ATP-binding domain (NBD), which is responsible for energy generation. Confers resistance against macrolides. The polypeptide is Macrolide export ATP-binding/permease protein MacB (Azoarcus sp. (strain BH72)).